Here is a 565-residue protein sequence, read N- to C-terminus: Protein priB (565 aa).

The zn(2)-C6 fungal-type DNA-binding region spans 20-50 (CTTCRAAKMKCVGAEDGQRQCQRCKRANVQC). Disordered stretches follow at residues 82-170 (AKSK…SDRA) and 195-224 (NPEDAPASGPSSVRCSETYSPPQSPAAPAG). Basic and acidic residues predominate over residues 90–111 (DARHSSSYRDSHPSLGEPDDRY). Low complexity predominate over residues 129–155 (SNLPPLNLPSYPDAASEYTASSTSSRT). Positions 203–215 (GPSSVRCSETYSP) are enriched in polar residues.

The protein localises to the nucleus. The polypeptide is Protein priB (priB) (Lentinula edodes (Shiitake mushroom)).